Consider the following 465-residue polypeptide: Mothers against decapentaplegic homolog 5 (465 aa).

Thr-2 is subject to N-acetylthreonine. Residues 13–137 (PAVKRLLGWK…YKRVESPVLP (125 aa)) form the MH1 domain. Zn(2+) contacts are provided by Cys-65, Cys-110, Cys-122, and His-127. Positions 163–249 (NEPHMPQNAT…PMDTSNNMIP (87 aa)) are disordered. Over residues 169–182 (QNATFPDSFHQPNN) the composition is skewed to polar residues. Residues 186–197 (PLSPNSPYPPSP) show a composition bias toward pro residues. Residues 198–214 (ASSTYPNSPASSGPGSP) show a composition bias toward low complexity. The segment covering 234 to 249 (GQDNSQPMDTSNNMIP) has biased composition (polar residues). Positions 271–465 (WCSIVYYELN…SPLNPISSVS (195 aa)) constitute an MH2 domain. Phosphoserine is present on residues Ser-463 and Ser-465.

This sequence belongs to the dwarfin/SMAD family. Homodimer. Forms trimers with the co-SMAD SMAD4. Interacts with PEBP2-alpha subunit and SMURF1. Interacts with SUV39H1 and SUV39H2. Interacts (via MH2 domain) with LEMD3. Interacts with WWP1. Interacts with TMEM119. Interacts with ZNF8. Interacts with RANBP3L. Interacts with HK1. Interacts with HGS; this interaction attenuates BMP signaling. In terms of processing, phosphorylated on serine by BMP (bone morphogenetic proteins) type 1 receptor kinase. Post-translationally, ubiquitin-mediated proteolysis by SMAD-specific E3 ubiquitin ligase SMURF1. In terms of tissue distribution, ubiquitous.

The protein localises to the cytoplasm. The protein resides in the nucleus. Its subcellular location is the mitochondrion. In terms of biological role, transcriptional regulator that plays a role in various cellular processes including embryonic development, cell differentiation, angiogenesis and tissue homeostasis. Upon BMP ligand binding to their receptors at the cell surface, is phosphorylated by activated type I BMP receptors (BMPRIs) and associates with SMAD4 to form a heteromeric complex which translocates into the nucleus acting as transcription factor. In turn, the hetero-trimeric complex recognizes cis-regulatory elements containing Smad Binding Elements (SBEs) to modulate the outcome of the signaling network. Non-phosphorylated SMAD5 has a cytoplasmic role in energy metabolism regulation by promoting mitochondrial respiration and glycolysis in response to cytoplasmic pH changes. Mechanistically, interacts with hexokinase 1/HK1 and thereby accelerates glycolysis. This Homo sapiens (Human) protein is Mothers against decapentaplegic homolog 5 (SMAD5).